The sequence spans 213 residues: Imidazole glycerol phosphate synthase subunit HisH (213 aa).

A Glutamine amidotransferase type-1 domain is found at 4-211 (NLGLIDYGMG…LTWLRNGAEP (208 aa)). Residue Cys82 is the Nucleophile of the active site. Catalysis depends on residues His186 and Glu188.

As to quaternary structure, heterodimer of HisH and HisF.

The protein resides in the cytoplasm. It catalyses the reaction 5-[(5-phospho-1-deoxy-D-ribulos-1-ylimino)methylamino]-1-(5-phospho-beta-D-ribosyl)imidazole-4-carboxamide + L-glutamine = D-erythro-1-(imidazol-4-yl)glycerol 3-phosphate + 5-amino-1-(5-phospho-beta-D-ribosyl)imidazole-4-carboxamide + L-glutamate + H(+). It carries out the reaction L-glutamine + H2O = L-glutamate + NH4(+). It functions in the pathway amino-acid biosynthesis; L-histidine biosynthesis; L-histidine from 5-phospho-alpha-D-ribose 1-diphosphate: step 5/9. Functionally, IGPS catalyzes the conversion of PRFAR and glutamine to IGP, AICAR and glutamate. The HisH subunit catalyzes the hydrolysis of glutamine to glutamate and ammonia as part of the synthesis of IGP and AICAR. The resulting ammonia molecule is channeled to the active site of HisF. This Synechococcus sp. (strain CC9605) protein is Imidazole glycerol phosphate synthase subunit HisH.